Here is a 317-residue protein sequence, read N- to C-terminus: Melanocyte-stimulating hormone receptor (317 aa).

Residues 1-37 lie on the Extracellular side of the membrane; that stretch reads MPVLGSQRRLLGSLNCTPPATFPLTLAPNRTGPQCLE. N-linked (GlcNAc...) asparagine glycosylation occurs at asparagine 29. Residues 38–63 form a helical membrane-spanning segment; the sequence is VAIPDGLFLSLGLVSLVENVLVVAAI. Over 64–72 the chain is Cytoplasmic; that stretch reads AKNRNLQSP. A helical membrane pass occupies residues 73 to 93; sequence MYYFICCLAMSDLLVSVSNVL. Residues 94-118 lie on the Extracellular side of the membrane; the sequence is ETAVMLLLEAGALAARAAVVQQLDN. Residues 119–140 form a helical membrane-spanning segment; the sequence is VIDVLICGSMVSSLCFLGAIAV. Residues 141–163 lie on the Cytoplasmic side of the membrane; that stretch reads DRYISIFYALRYHSVVTLPRAWR. Residues 164–183 traverse the membrane as a helical segment; that stretch reads IIAAIWVASILTSLLFITYY. The Extracellular portion of the chain corresponds to 184 to 191; the sequence is NHTVVLLC. Residues 192–211 traverse the membrane as a helical segment; it reads LVGFFIAMLALMAVLYVHML. At 212–240 the chain is on the cytoplasmic side; that stretch reads ARACQHARGIARLQKRQRPIHQGFGLKGA. Residues 241–266 form a helical membrane-spanning segment; it reads ATLTILLGVFFLCWGPFFLHLSLIVL. The Extracellular portion of the chain corresponds to 267-279; it reads CPQHPTCGCIFKN. The helical transmembrane segment at 280–300 threads the bilayer; that stretch reads FNLFLALIICNAIVDPLIYAF. Residues 301–317 lie on the Cytoplasmic side of the membrane; it reads RSQELRKTLQEVLQCSW. Residue cysteine 315 is the site of S-palmitoyl cysteine attachment.

The protein belongs to the G-protein coupled receptor 1 family. Interacts with MGRN1, but does not undergo MGRN1-mediated ubiquitination; this interaction competes with GNAS-binding and thus inhibits agonist-induced cAMP production. Interacts with OPN3; the interaction results in a decrease in MC1R-mediated cAMP signaling and ultimately a decrease in melanin production in melanocytes.

The protein localises to the cell membrane. Functionally, receptor for MSH (alpha, beta and gamma) and ACTH. The activity of this receptor is mediated by G proteins which activate adenylate cyclase. Mediates melanogenesis, the production of eumelanin (black/brown) and phaeomelanin (red/yellow), via regulation of cAMP signaling in melanocytes. The protein is Melanocyte-stimulating hormone receptor (MC1R) of Cervus elaphus (Red deer).